The following is a 372-amino-acid chain: MPANLTEGSFHANQTVPMLDSSPVACTEIVTFTEALEAEEWGSFYSSFKTEQLITLWVLFVFTIVGNSVVLFSTWRRKRKSRMTFFVTQLAITDSFTGLINILTDIIWRFTGDFMAPDLVCRIVRYLQVVLLYASTYVLVSLSIDRYHAIVYPMKFLQGAEKQAKVLIGIAWSLSFLFSIPTLIIFGKRTLSNGEVQCWALWPDDSYWTPYMTIVAFLVYFIPLTIISVIYGLVIRTIWIKSKAHETVISNCSDGELCCSYNRGLISKAKIKAIKYSIVIILAFICCWSPYFLFDMLDNFNLLPDTKERFYASVIIQNLPALNSAINPLIYCIFSGSLCSPCKVQRSQDSRMTYRERSERHEMQILSKPEFI.

The Extracellular portion of the chain corresponds to 1 to 52 (MPANLTEGSFHANQTVPMLDSSPVACTEIVTFTEALEAEEWGSFYSSFKTEQ). Asn4 and Asn13 each carry an N-linked (GlcNAc...) asparagine glycan. Residues 53 to 73 (LITLWVLFVFTIVGNSVVLFS) traverse the membrane as a helical segment. Over 74-82 (TWRRKRKSR) the chain is Cytoplasmic. Residues 83 to 103 (MTFFVTQLAITDSFTGLINIL) traverse the membrane as a helical segment. The Extracellular portion of the chain corresponds to 104 to 122 (TDIIWRFTGDFMAPDLVCR). Cys121 and Cys198 are oxidised to a cystine. Residues 123 to 143 (IVRYLQVVLLYASTYVLVSLS) traverse the membrane as a helical segment. Residues 144–165 (IDRYHAIVYPMKFLQGAEKQAK) are Cytoplasmic-facing. Residues 166–186 (VLIGIAWSLSFLFSIPTLIIF) form a helical membrane-spanning segment. Over 187 to 213 (GKRTLSNGEVQCWALWPDDSYWTPYMT) the chain is Extracellular. The chain crosses the membrane as a helical span at residues 214-234 (IVAFLVYFIPLTIISVIYGLV). At 235–276 (IRTIWIKSKAHETVISNCSDGELCCSYNRGLISKAKIKAIKY) the chain is on the cytoplasmic side. The chain crosses the membrane as a helical span at residues 277–297 (SIVIILAFICCWSPYFLFDML). Residues 298–313 (DNFNLLPDTKERFYAS) lie on the Extracellular side of the membrane. The chain crosses the membrane as a helical span at residues 314–334 (VIIQNLPALNSAINPLIYCIF). Residues 335–372 (SGSLCSPCKVQRSQDSRMTYRERSERHEMQILSKPEFI) lie on the Cytoplasmic side of the membrane.

The protein belongs to the G-protein coupled receptor 1 family. Vasopressin/oxytocin receptor subfamily.

Its subcellular location is the cell membrane. G-protein coupled receptor for neuropeptide S (NPS). Promotes mobilization of intracellular Ca(2+) stores. Inhibits cell growth in response to NPS binding. Involved in pathogenesis of asthma and other IgE-mediated diseases. In Rattus norvegicus (Rat), this protein is Neuropeptide S receptor (Npsr1).